A 282-amino-acid chain; its full sequence is tRNA pseudouridine synthase A (282 aa).

The active-site Nucleophile is Asp-61. A substrate-binding site is contributed by Tyr-119.

This sequence belongs to the tRNA pseudouridine synthase TruA family. As to quaternary structure, homodimer.

The catalysed reaction is uridine(38/39/40) in tRNA = pseudouridine(38/39/40) in tRNA. Functionally, formation of pseudouridine at positions 38, 39 and 40 in the anticodon stem and loop of transfer RNAs. The polypeptide is tRNA pseudouridine synthase A (Nostoc sp. (strain PCC 7120 / SAG 25.82 / UTEX 2576)).